Reading from the N-terminus, the 148-residue chain is Lysozyme C (148 aa).

A signal peptide spans 1–18 (MKALLLLGLLLLSVTVQG). Positions 19-148 (KIFERCDLAR…VSQYVRNCGV (130 aa)) constitute a C-type lysozyme domain. 4 disulfides stabilise this stretch: Cys-24-Cys-146, Cys-48-Cys-134, Cys-83-Cys-99, and Cys-95-Cys-113. Catalysis depends on residues Glu-53 and Asp-71.

The protein belongs to the glycosyl hydrolase 22 family. As to quaternary structure, monomer.

It carries out the reaction Hydrolysis of (1-&gt;4)-beta-linkages between N-acetylmuramic acid and N-acetyl-D-glucosamine residues in a peptidoglycan and between N-acetyl-D-glucosamine residues in chitodextrins.. Functionally, lysozymes have primarily a bacteriolytic function; those in tissues and body fluids are associated with the monocyte-macrophage system and enhance the activity of immunoagents. The sequence is that of Lysozyme C (LYZ) from Halichoerus grypus (Gray seal).